We begin with the raw amino-acid sequence, 374 residues long: UPF0754 membrane protein SAB1779c (374 aa).

2 helical membrane passes run 4–24 (LFII…TNVI) and 354–374 (SLGF…AIFV).

Belongs to the UPF0754 family.

The protein localises to the cell membrane. In Staphylococcus aureus (strain bovine RF122 / ET3-1), this protein is UPF0754 membrane protein SAB1779c.